The primary structure comprises 927 residues: Probable RNA-dependent RNA polymerase 4 (927 aa).

The tract at residues 98–135 (GESPVQFPRTPGKKSCRASQAEVSLDREDPSPKFLRGD) is disordered. Residues 121–135 (SLDREDPSPKFLRGD) are compositionally biased toward basic and acidic residues.

It belongs to the RdRP family.

It catalyses the reaction RNA(n) + a ribonucleoside 5'-triphosphate = RNA(n+1) + diphosphate. Probably involved in the RNA silencing pathway and required for the generation of small interfering RNAs (siRNAs). This is Probable RNA-dependent RNA polymerase 4 (RDR4) from Arabidopsis thaliana (Mouse-ear cress).